The following is a 139-amino-acid chain: Putative pre-16S rRNA nuclease (139 aa).

It belongs to the YqgF nuclease family.

The protein localises to the cytoplasm. Could be a nuclease involved in processing of the 5'-end of pre-16S rRNA. This Streptococcus mutans serotype c (strain ATCC 700610 / UA159) protein is Putative pre-16S rRNA nuclease.